We begin with the raw amino-acid sequence, 57 residues long: Large ribosomal subunit protein bL33 (57 aa).

It belongs to the bacterial ribosomal protein bL33 family.

In Shewanella sp. (strain MR-4), this protein is Large ribosomal subunit protein bL33.